The primary structure comprises 195 residues: Envelope glycoprotein L (195 aa).

The N-terminal stretch at 1-25 (MKIYRVLVHLSFVLGMFTKTNTVLA) is a signal peptide. Residues 28–157 (KYDLVHGFMR…LIAPADISCY (130 aa)) form an interaction with gH region. The 168-residue stretch at 28 to 195 (KYDLVHGFMR…TTSGSRRANA (168 aa)) folds into the gL alphaherpesvirus-type domain. 2 cysteine pairs are disulfide-bonded: C49/C78 and C156/C178.

This sequence belongs to the herpesviridae glycoprotein L (gL) family. Alphaherpesvirinae gL subfamily. In terms of assembly, interacts with glycoprotein H (gH); this interaction is necessary for the correct processing and cell surface expression of gH. The heterodimer gH/gL seems to interact with gB trimers during fusion.

The protein resides in the virion membrane. Its subcellular location is the host cell membrane. It is found in the host Golgi apparatus. It localises to the host trans-Golgi network. The heterodimer glycoprotein H-glycoprotein L is required for the fusion of viral and plasma membranes leading to virus entry into the host cell. Acts as a functional inhibitor of gH and maintains gH in an inhibited form. Upon binding to host integrins, gL dissociates from gH leading to activation of the viral fusion glycoproteins gB and gH. The protein is Envelope glycoprotein L of Gallus gallus (Chicken).